Reading from the N-terminus, the 63-residue chain is Cecropin-B (63 aa).

A signal peptide spans 1-23; sequence MNFNKIFVFVALILAISLGNSEA. An Arginine amide modification is found at R62.

Belongs to the cecropin family. Strongly expressed in larval, pupal and adult fat body and hemocytes after injection of bacteria. Maximal expression is seen in pupae.

The protein resides in the secreted. Its function is as follows. Cecropins have lytic and antibacterial activity against several Gram-positive and Gram-negative bacteria. The sequence is that of Cecropin-B (CecB) from Drosophila melanogaster (Fruit fly).